A 119-amino-acid polypeptide reads, in one-letter code: 5-hydroxyisourate hydrolase (119 aa).

Positions 8, 47, and 116 each coordinate substrate.

The protein belongs to the transthyretin family. 5-hydroxyisourate hydrolase subfamily. As to quaternary structure, homotetramer.

It catalyses the reaction 5-hydroxyisourate + H2O = 5-hydroxy-2-oxo-4-ureido-2,5-dihydro-1H-imidazole-5-carboxylate + H(+). It participates in purine metabolism; urate degradation; (S)-allantoin from urate: step 2/3. Its function is as follows. Catalyzes the hydrolysis of 5-hydroxyisourate (HIU) to 2-oxo-4-hydroxy-4-carboxy-5-ureidoimidazoline (OHCU). The polypeptide is 5-hydroxyisourate hydrolase (Halalkalibacterium halodurans (strain ATCC BAA-125 / DSM 18197 / FERM 7344 / JCM 9153 / C-125) (Bacillus halodurans)).